Reading from the N-terminus, the 694-residue chain is MTDLSRYRNIGIFAHVDAGKTTTTERILKLTGKIHKIGEVHDGAATTDFMEQEQERGITIQSAATTCFWKDHRFNIIDTPGHVDFTIEVYRSLKVLDGGIGVFCGSGGVEPQSETNWRYANDSEVARIIYVNKLDRVGADFYRVVKQIRDVLGAYPLVMTLPIGREESFIGVVELLTRKAWIWDDSGDPMKYEVKDVPAEMADEVEKWRAELVEKAVEQDDEVMEKYLEGEEPDVDTLKRLIRKGTIKLDFFPTYCGSSFKNKGVQLVLDAVVDYLPDPTEVKPQPEVDLEGHETGEFAIVDPDRPLRALAFKIMDDRYGALTFLRLYSGRLEKGTTVLNTATGKTERIGRIVEMHANQRNELDSAQAGDIVAVLGMKNVQTGHTLCDPDKPATLEPMVFPDPVISIAVTPKDKAANEKMGIALGKMVQEDPSFHVETDQESGETILKGMGELHLDIKVDILKRTHGVEVNVGKPQVAYRETITRRVEDEYVHKKQTGGSGQYAKINYVIEPGEPGSGFVFESTVTGGNVPREFWPAVEKGFRSMLGKGVLAGYPCVDFKVNLTDGGFHAVDSSAIAFEIAAQAAFRQSVPKAAPQLLEPIMKVDVFTPDAHVGDVIGDLNRRRGMIKSQEAGVTGVRIKAEVPLSEMFGYIGDLRTMTSGRGQFSMEFSHYMPCPKNVADEVIKEAQERAARK.

In terms of domain architecture, tr-type G spans 5–280; sequence SRYRNIGIFA…AVVDYLPDPT (276 aa). Residues 14 to 21, 78 to 82, and 132 to 135 each bind GTP; these read AHVDAGKT, DTPGH, and NKLD.

Belongs to the TRAFAC class translation factor GTPase superfamily. Classic translation factor GTPase family. EF-G/EF-2 subfamily.

It localises to the cytoplasm. Its function is as follows. Catalyzes the GTP-dependent ribosomal translocation step during translation elongation. During this step, the ribosome changes from the pre-translocational (PRE) to the post-translocational (POST) state as the newly formed A-site-bound peptidyl-tRNA and P-site-bound deacylated tRNA move to the P and E sites, respectively. Catalyzes the coordinated movement of the two tRNA molecules, the mRNA and conformational changes in the ribosome. The protein is Elongation factor G 1 of Methylococcus capsulatus (strain ATCC 33009 / NCIMB 11132 / Bath).